The following is a 201-amino-acid chain: Small ribosomal subunit protein uS4c (201 aa).

A disordered region spans residues 15–44; sequence LGALPGLTSKRPRSGSDLRNQSRSGKKSQY. The 62-residue stretch at 89-150 folds into the S4 RNA-binding domain; the sequence is MRLDNILFRL…EQRSRALIQN (62 aa).

It belongs to the universal ribosomal protein uS4 family. Part of the 30S ribosomal subunit. Contacts protein S5. The interaction surface between S4 and S5 is involved in control of translational fidelity.

It is found in the plastid. It localises to the chloroplast. Functionally, one of the primary rRNA binding proteins, it binds directly to 16S rRNA where it nucleates assembly of the body of the 30S subunit. In terms of biological role, with S5 and S12 plays an important role in translational accuracy. The protein is Small ribosomal subunit protein uS4c (rps4) of Calycanthus floridus var. glaucus (Eastern sweetshrub).